The sequence spans 147 residues: Large ribosomal subunit protein uL15 (147 aa).

The interval 1–57 is disordered; it reads MKLHELKSAPKSRNHKAKVVGRGHGSGLGKTSGRGQKGQKARKSGRTRPGFEGGQTP. Over residues 10-21 the composition is skewed to basic residues; that stretch reads PKSRNHKAKVVG. Positions 22 to 36 are enriched in gly residues; that stretch reads RGHGSGLGKTSGRGQ. Residues 37-46 show a composition bias toward basic residues; the sequence is KGQKARKSGR.

It belongs to the universal ribosomal protein uL15 family. Part of the 50S ribosomal subunit.

Binds to the 23S rRNA. The sequence is that of Large ribosomal subunit protein uL15 from Mycoplasmoides gallisepticum (strain R(low / passage 15 / clone 2)) (Mycoplasma gallisepticum).